A 29-amino-acid chain; its full sequence is Glucagon (29 aa).

Belongs to the glucagon family.

It localises to the secreted. Functionally, glucagon plays a key role in glucose metabolism and homeostasis. Regulates blood glucose by increasing gluconeogenesis and decreasing glycolysis. The chain is Glucagon (GCG) from Meleagris gallopavo (Wild turkey).